The chain runs to 42 residues: Photosystem I reaction center subunit IX (42 aa).

The chain crosses the membrane as a helical span at residues 7-27 (YLSTAPVLATLWFGFLAGLLI).

It belongs to the PsaJ family.

The protein resides in the plastid. It localises to the chloroplast thylakoid membrane. Functionally, may help in the organization of the PsaE and PsaF subunits. The protein is Photosystem I reaction center subunit IX of Huperzia lucidula (Shining clubmoss).